We begin with the raw amino-acid sequence, 845 residues long: Molybdenum cofactor sulfurase (845 aa).

Lys240 carries the N6-(pyridoxal phosphate)lysine modification. Residue Cys404 is part of the active site. The MOSC domain occupies Ser666 to Ser840.

The protein belongs to the class-V pyridoxal-phosphate-dependent aminotransferase family. MOCOS subfamily. It depends on pyridoxal 5'-phosphate as a cofactor.

It catalyses the reaction Mo-molybdopterin + L-cysteine + AH2 = thio-Mo-molybdopterin + L-alanine + A + H2O. It functions in the pathway cofactor biosynthesis; molybdopterin biosynthesis. In terms of biological role, sulfurates the molybdenum cofactor. Sulfation of molybdenum is essential for xanthine dehydrogenase (XDH) and aldehyde oxidase (ADO) enzymes in which molybdenum cofactor is liganded by 1 oxygen and 1 sulfur atom in active form. The polypeptide is Molybdenum cofactor sulfurase (Aspergillus clavatus (strain ATCC 1007 / CBS 513.65 / DSM 816 / NCTC 3887 / NRRL 1 / QM 1276 / 107)).